The chain runs to 132 residues: MTMTDPLGDMLTRIRNGAARRKSSVSTPASSLRARVLDVLQSEGYIRGYSKVDFENGKAEFTIELKYYEGASVIREIGRVSKPGRRVYVSVKSIPQVANGLGITILSTPKGVMADHQAREQNVGGEVLCSVF.

It belongs to the universal ribosomal protein uS8 family. As to quaternary structure, part of the 30S ribosomal subunit. Contacts proteins S5 and S12.

Its function is as follows. One of the primary rRNA binding proteins, it binds directly to 16S rRNA central domain where it helps coordinate assembly of the platform of the 30S subunit. In Agrobacterium fabrum (strain C58 / ATCC 33970) (Agrobacterium tumefaciens (strain C58)), this protein is Small ribosomal subunit protein uS8.